Here is a 648-residue protein sequence, read N- to C-terminus: Chaperone protein DnaK (648 aa).

Position 200 is a phosphothreonine; by autocatalysis (threonine 200). The tract at residues glutamine 612–glutamine 631 is disordered.

It belongs to the heat shock protein 70 family.

Its function is as follows. Acts as a chaperone. This is Chaperone protein DnaK from Burkholderia multivorans (strain ATCC 17616 / 249).